The sequence spans 290 residues: Probable aquaporin PIP2-7 (290 aa).

The next 2 helical transmembrane spans lie at 45 to 65 (ALIA…ATVI) and 79 to 99 (GVGY…LVYC). The short motif at 109-111 (NPA) is the NPA 1 element. Transmembrane regions (helical) follow at residues 128 to 148 (VLYV…VKGI), 168 to 188 (SAAG…YTVF), and 202 to 222 (IPVL…LATI). The short motif at 230–232 (NPA) is the NPA 2 element. The helical transmembrane segment at 252–272 (IFWVGPVIGAFLAAAYHKLVL) threads the bilayer.

The protein belongs to the MIP/aquaporin (TC 1.A.8) family. PIP (TC 1.A.8.11) subfamily. As to expression, expressed in roots.

It localises to the cell membrane. Functionally, aquaporins facilitate the transport of water and small neutral solutes across cell membranes. In Oryza sativa subsp. japonica (Rice), this protein is Probable aquaporin PIP2-7 (PIP2-7).